The following is a 135-amino-acid chain: Sex-regulated protein janus-A (135 aa).

K37 provides a ligand contact to substrate. H63 serves as the catalytic Proton acceptor. Residue 104–106 (SQG) coordinates substrate.

This sequence belongs to the janus family.

Its function is as follows. JanA and janB regulate somatic sex differentiation. The chain is Sex-regulated protein janus-A (janA) from Drosophila mauritiana (Fruit fly).